Consider the following 181-residue polypeptide: Oligoribonuclease (181 aa).

Residues 8 to 171 form the Exonuclease domain; sequence LIWVDLEMTG…EDIKESIAEM (164 aa). The active site involves Tyr129.

The protein belongs to the oligoribonuclease family.

Its subcellular location is the cytoplasm. Functionally, 3'-to-5' exoribonuclease specific for small oligoribonucleotides. In Shewanella frigidimarina (strain NCIMB 400), this protein is Oligoribonuclease.